A 258-amino-acid chain; its full sequence is tRNA (guanine-N(1)-)-methyltransferase (258 aa).

S-adenosyl-L-methionine contacts are provided by residues Gly-122 and 142–147; that span reads LGDFVL.

Belongs to the RNA methyltransferase TrmD family. Homodimer.

It localises to the cytoplasm. It carries out the reaction guanosine(37) in tRNA + S-adenosyl-L-methionine = N(1)-methylguanosine(37) in tRNA + S-adenosyl-L-homocysteine + H(+). Specifically methylates guanosine-37 in various tRNAs. This chain is tRNA (guanine-N(1)-)-methyltransferase, found in Hahella chejuensis (strain KCTC 2396).